We begin with the raw amino-acid sequence, 253 residues long: Protein C1orf43 homolog (253 aa).

Residues 11–31 traverse the membrane as a helical segment; the sequence is VNVVLVMAYGSLVFVLLFIFV.

It localises to the membrane. It is found in the golgi apparatus. The protein resides in the mitochondrion. Functionally, general regulator of phagocytosis. Required to uptake Gram negative bacterium by macrophages. This chain is Protein C1orf43 homolog, found in Mus musculus (Mouse).